The primary structure comprises 374 residues: tRNA-specific 2-thiouridylase MnmA (374 aa).

ATP contacts are provided by residues 15–22 (GMSGGVDS) and Met41. Residues 101–103 (NPD) form an interaction with target base in tRNA region. Cys106 functions as the Nucleophile in the catalytic mechanism. The cysteines at positions 106 and 206 are disulfide-linked. Position 130 (Gly130) interacts with ATP. The tract at residues 156–158 (KDQ) is interaction with tRNA. The active-site Cysteine persulfide intermediate is Cys206. The interaction with tRNA stretch occupies residues 324-325 (RY).

Belongs to the MnmA/TRMU family.

The protein localises to the cytoplasm. It carries out the reaction S-sulfanyl-L-cysteinyl-[protein] + uridine(34) in tRNA + AH2 + ATP = 2-thiouridine(34) in tRNA + L-cysteinyl-[protein] + A + AMP + diphosphate + H(+). Its function is as follows. Catalyzes the 2-thiolation of uridine at the wobble position (U34) of tRNA, leading to the formation of s(2)U34. This Aromatoleum aromaticum (strain DSM 19018 / LMG 30748 / EbN1) (Azoarcus sp. (strain EbN1)) protein is tRNA-specific 2-thiouridylase MnmA.